The chain runs to 216 residues: Glycerol uptake facilitator protein-like 6 (216 aa).

The next 2 membrane-spanning stretches (helical) occupy residues Leu5 to Ala25 and Leu30 to Ile50. The NPA 1 motif lies at Asn56–Ala58. 3 consecutive transmembrane segments (helical) span residues Ala72–Val92, Ile114–Ile134, and Phe147–Thr167. Residues Asn172–Ala174 carry the NPA 2 motif. Residues Leu191 to Gly213 form a helical membrane-spanning segment.

The protein belongs to the MIP/aquaporin (TC 1.A.8) family.

It localises to the cell membrane. Functionally, probable transporter that facilitates the transmembrane diffusion of an unknown substrate. Is not permeable to water, dihydroxyacetone, glycerol, urea, H(2)O(2) and D/L-lactic acid. The chain is Glycerol uptake facilitator protein-like 6 from Lactiplantibacillus plantarum (strain ATCC BAA-793 / NCIMB 8826 / WCFS1) (Lactobacillus plantarum).